The primary structure comprises 406 residues: Probable mannan endo-1,4-beta-mannosidase C (406 aa).

The signal sequence occupies residues 1 to 20; that stretch reads MLINFEKVLSLALLAGSVSG. The N-linked (GlcNAc...) asparagine glycan is linked to Asn58. Trp80 lines the substrate pocket. Asn86 and Asn114 each carry an N-linked (GlcNAc...) asparagine glycan. Asn201 is a substrate binding site. Glu202 serves as the catalytic Proton donor. Residue Tyr287 participates in substrate binding. Catalysis depends on Glu320, which acts as the Nucleophile. N-linked (GlcNAc...) asparagine glycosylation is present at Asn338. Trp362 lines the substrate pocket.

This sequence belongs to the glycosyl hydrolase 5 (cellulase A) family.

The protein resides in the secreted. The catalysed reaction is Random hydrolysis of (1-&gt;4)-beta-D-mannosidic linkages in mannans, galactomannans and glucomannans.. Its function is as follows. Endo-1,4-mannanase, a crucial enzyme for depolymerization of seed galactomannans and wood galactoglucomannans. This Aspergillus terreus (strain NIH 2624 / FGSC A1156) protein is Probable mannan endo-1,4-beta-mannosidase C (manC).